The chain runs to 292 residues: ATP synthase subunit a (292 aa).

Transmembrane regions (helical) follow at residues I37 to C57, F96 to M116, V144 to C164, P192 to A212, L230 to L250, and A263 to I283.

The protein belongs to the ATPase A chain family. As to quaternary structure, F-type ATPases have 2 components, CF(1) - the catalytic core - and CF(0) - the membrane proton channel. CF(1) has five subunits: alpha(3), beta(3), gamma(1), delta(1), epsilon(1). CF(0) has three main subunits: a(1), b(2) and c(9-12). The alpha and beta chains form an alternating ring which encloses part of the gamma chain. CF(1) is attached to CF(0) by a central stalk formed by the gamma and epsilon chains, while a peripheral stalk is formed by the delta and b chains.

Its subcellular location is the cell inner membrane. In terms of biological role, key component of the proton channel; it plays a direct role in the translocation of protons across the membrane. This chain is ATP synthase subunit a, found in Paracidovorax citrulli (strain AAC00-1) (Acidovorax citrulli).